The chain runs to 327 residues: Phenylalanine--tRNA ligase alpha subunit (327 aa).

Glu-252 contacts Mg(2+).

The protein belongs to the class-II aminoacyl-tRNA synthetase family. Phe-tRNA synthetase alpha subunit type 1 subfamily. Tetramer of two alpha and two beta subunits. The cofactor is Mg(2+).

It localises to the cytoplasm. The enzyme catalyses tRNA(Phe) + L-phenylalanine + ATP = L-phenylalanyl-tRNA(Phe) + AMP + diphosphate + H(+). This is Phenylalanine--tRNA ligase alpha subunit from Shewanella sediminis (strain HAW-EB3).